The following is a 41-amino-acid chain: Photosystem II reaction center protein X (41 aa).

Topologically, residues 2–6 (TITPS) are lumenal. A helical transmembrane segment spans residues 7–29 (LKGFFIGLLSGAVVLGLTFAVLI). The Cytoplasmic segment spans residues 30–41 (AISQIDKVQRSL).

Belongs to the PsbX family. Type 1 subfamily. PSII is composed of 1 copy each of membrane proteins PsbA, PsbB, PsbC, PsbD, PsbE, PsbF, PsbH, PsbI, PsbJ, PsbK, PsbL, PsbM, PsbT, PsbX, PsbY, PsbZ, Psb30/Ycf12, peripheral proteins PsbO, CyanoQ (PsbQ), PsbU, PsbV and a large number of cofactors. It forms dimeric complexes. Part of a photosystem II (PSII) assembly intermediate complex PSII-I; crystallized from a strain deleted of psbJ, it forms monomeric PSII before addition of the oxygen evolving complex. PSII-I includes 3 assembly factors not found in mature PSII (Psb27, Psb28 and Psb34). The cofactor is PSII binds multiple chlorophylls, carotenoids and specific lipids..

It is found in the cellular thylakoid membrane. Involved in the binding and/or turnover of quinones at the Q(B) site of photosystem II (PSII). PSII is a light-driven water plastoquinone oxidoreductase, using light energy to abstract electrons from H(2)O, generating a proton gradient subsequently used for ATP formation. This Thermosynechococcus vestitus (strain NIES-2133 / IAM M-273 / BP-1) protein is Photosystem II reaction center protein X.